Consider the following 432-residue polypeptide: Adenylosuccinate synthetase (432 aa).

GTP-binding positions include 13 to 19 (GDEGKGK) and 41 to 43 (GHT). D14 serves as the catalytic Proton acceptor. 2 residues coordinate Mg(2+): D14 and G41. IMP is bound by residues 14-17 (DEGK), 39-42 (NAGH), T131, R145, Q226, T241, and R305. The Proton donor role is filled by H42. Position 301 to 307 (301 to 307 (SVTGRAR)) interacts with substrate. Residues R307, 333 to 335 (KLD), and 416 to 418 (STG) each bind GTP.

Belongs to the adenylosuccinate synthetase family. As to quaternary structure, homodimer. Mg(2+) serves as cofactor.

The protein resides in the cytoplasm. The enzyme catalyses IMP + L-aspartate + GTP = N(6)-(1,2-dicarboxyethyl)-AMP + GDP + phosphate + 2 H(+). It participates in purine metabolism; AMP biosynthesis via de novo pathway; AMP from IMP: step 1/2. Functionally, plays an important role in the de novo pathway of purine nucleotide biosynthesis. Catalyzes the first committed step in the biosynthesis of AMP from IMP. The protein is Adenylosuccinate synthetase of Neisseria meningitidis serogroup B (strain ATCC BAA-335 / MC58).